Here is a 649-residue protein sequence, read N- to C-terminus: DNA ligase (649 aa).

NAD(+) is bound by residues 62-66 (DSTYD) and 104-105 (ST). The active-site N6-AMP-lysine intermediate is the Lys142. NAD(+)-binding residues include Arg158, Glu189, and Lys301. Positions 389, 392, 405, and 411 each coordinate Zn(2+). A BRCT domain is found at 569–649 (PGETPVFGKI…LDYLALISTY (81 aa)).

Belongs to the NAD-dependent DNA ligase family. LigA subfamily. The cofactor is Mg(2+). Requires Mn(2+) as cofactor.

It carries out the reaction NAD(+) + (deoxyribonucleotide)n-3'-hydroxyl + 5'-phospho-(deoxyribonucleotide)m = (deoxyribonucleotide)n+m + AMP + beta-nicotinamide D-nucleotide.. DNA ligase that catalyzes the formation of phosphodiester linkages between 5'-phosphoryl and 3'-hydroxyl groups in double-stranded DNA using NAD as a coenzyme and as the energy source for the reaction. It is essential for DNA replication and repair of damaged DNA. The protein is DNA ligase of Psychromonas ingrahamii (strain DSM 17664 / CCUG 51855 / 37).